The chain runs to 150 residues: 3-hydroxyacyl-[acyl-carrier-protein] dehydratase FabZ (150 aa).

His-56 is a catalytic residue.

It belongs to the thioester dehydratase family. FabZ subfamily.

The protein localises to the cytoplasm. It carries out the reaction a (3R)-hydroxyacyl-[ACP] = a (2E)-enoyl-[ACP] + H2O. In terms of biological role, involved in unsaturated fatty acids biosynthesis. Catalyzes the dehydration of short chain beta-hydroxyacyl-ACPs and long chain saturated and unsaturated beta-hydroxyacyl-ACPs. This Desulfotalea psychrophila (strain LSv54 / DSM 12343) protein is 3-hydroxyacyl-[acyl-carrier-protein] dehydratase FabZ.